A 30-amino-acid polypeptide reads, in one-letter code: Photosystem I reaction center subunit XII (30 aa).

A helical membrane pass occupies residues 7-29 (LIAFFLAFTAGILAIKLGQALYD).

This sequence belongs to the PsaM family.

Its subcellular location is the plastid. It localises to the chloroplast thylakoid membrane. In Pinus thunbergii (Japanese black pine), this protein is Photosystem I reaction center subunit XII.